The primary structure comprises 629 residues: Methyl-accepting chemotaxis protein PscA (629 aa).

The Cytoplasmic segment spans residues Met-1–Lys-9. Residues Ile-10 to Asp-30 traverse the membrane as a helical segment. At Tyr-31–Thr-276 the chain is on the periplasmic side. The 223-residue stretch at Ser-36–Val-258 folds into the Cache domain. A helical membrane pass occupies residues Ser-277–Ile-297. The HAMP domain occupies Arg-298 to Arg-352. Residues Arg-298 to Ile-629 are Cytoplasmic-facing. In terms of domain architecture, Methyl-accepting transducer spans Thr-357–Asn-593.

The protein belongs to the methyl-accepting chemotaxis (MCP) protein family.

The protein resides in the cell inner membrane. Its function is as follows. Chemotactic-signal transducers respond to changes in the concentration of attractants and repellents in the environment, transduce a signal from the outside to the inside of the cell, and facilitate sensory adaptation through the variation of the level of methylation. PscA recognizes specifically and with high affinity L-Asp, D-Asp and L-Glu. It exerts a double function, in mediating chemotaxis to these amino acids and in modulating cyclic di-GMP (c-di-GMP) levels, causing alterations in biofilm development. Plays a key role in the infection process. It may facilitate bacterial entry into the plant. This is Methyl-accepting chemotaxis protein PscA from Pseudomonas syringae pv. tomato (strain ATCC BAA-871 / DC3000).